Here is a 776-residue protein sequence, read N- to C-terminus: Conserved oligomeric Golgi complex subunit 4 (776 aa).

Phosphoserine occurs at positions 342 and 345.

This sequence belongs to the COG4 family. As to quaternary structure, component of the conserved oligomeric Golgi complex which is composed of eight different subunits and is required for normal Golgi morphology and localization.

Its subcellular location is the golgi apparatus membrane. Its function is as follows. Required for normal Golgi function. This chain is Conserved oligomeric Golgi complex subunit 4, found in Drosophila melanogaster (Fruit fly).